Here is a 250-residue protein sequence, read N- to C-terminus: Kv channel-interacting protein 4 (250 aa).

The KIS stretch occupies residues asparagine 2–serine 44. Phosphoserine occurs at positions 17 and 56. The region spanning leucine 61–proline 117 is the EF-hand 1; degenerate domain. 3 consecutive EF-hand domains span residues aspartate 120–glycine 155, threonine 156–methionine 191, and alanine 204–isoleucine 239. Positions 133, 135, 137, 144, 169, 171, 173, 175, 180, 217, 219, 221, and 228 each coordinate Ca(2+). The interval glutamate 237 to isoleucine 250 is interaction with KCND2.

The protein belongs to the recoverin family. In terms of assembly, component of heteromultimeric potassium channels. Identified in potassium channel complexes containing KCND1, KCND2, KCND3, KCNIP1, KCNIP2, KCNIP3, KCNIP4, DPP6 and DPP10. Interacts with KCND2. Interacts with KCND3. Interacts with the C-terminus of PSEN2 and probably PSEN1.

It is found in the cell membrane. It localises to the cytoplasm. The protein localises to the peroxisome. Regulatory subunit of Kv4/D (Shal)-type voltage-gated rapidly inactivating A-type potassium channels. Modulates KCND2 channel density, inactivation kinetics and rate of recovery from inactivation in a calcium-dependent and isoform-specific manner. Modulates KCND3/Kv4.3 currents. Isoform 4 does not increase KCND2 expression at the cell membrane. Isoform 4 retains KCND3 in the endoplasmic reticulum and negatively regulates its expression at the cell membrane. This is Kv channel-interacting protein 4 (KCNIP4) from Bos taurus (Bovine).